A 189-amino-acid chain; its full sequence is UPF0688 protein C1orf174 homolog (189 aa).

The segment at 53-137 (QMAGDGGEAK…TTDPSVFFDE (85 aa)) is disordered. Composition is skewed to basic and acidic residues over residues 59-73 (GEAK…HGEV) and 93-103 (APGERRGKENS).

Belongs to the UPF0688 family.

The protein localises to the nucleus. In Danio rerio (Zebrafish), this protein is UPF0688 protein C1orf174 homolog.